Consider the following 400-residue polypeptide: Laminin subunit B (400 aa).

Laminin EGF-like domains follow at residues 1–5 (EGCKP), 6–53 (CECD…GCKS), and 54–100 (CTCN…QCIP). Cystine bridges form between Cys-6/Cys-18, Cys-8/Cys-25, Cys-27/Cys-36, Cys-39/Cys-51, Cys-54/Cys-66, Cys-56/Cys-73, Cys-75/Cys-84, and Cys-87/Cys-98. The tract at residues 101 to 400 (CGECFDNWDK…AEAKNNAHEA (300 aa)) is domain II and I. A coiled-coil region spans residues 140–235 (KEFEELEQVL…RENALEIQEQ (96 aa)). Asn-160, Asn-175, Asn-216, Asn-266, Asn-283, Asn-310, and Asn-356 each carry an N-linked (GlcNAc...) asparagine glycan. The stretch at 353 to 400 (EAKNTSRKAEELIKSKYRSTSSTLSELENSNKQCKQATAEAKNNAHEA) forms a coiled coil. The segment at 369–400 (YRSTSSTLSELENSNKQCKQATAEAKNNAHEA) is disordered. The segment covering 371-383 (STSSTLSELENSN) has biased composition (low complexity).

As to quaternary structure, laminin is a complex glycoprotein, consisting of three different polypeptide chains (alpha, beta, gamma), which are bound to each other by disulfide bonds into a cross-shaped molecule comprising one long and three short arms with globules at each end. In terms of tissue distribution, individual glial and muscle cells.

It localises to the secreted. The protein localises to the extracellular space. The protein resides in the extracellular matrix. Binding to cells via a high affinity receptor, laminin is thought to mediate the attachment, migration and organization of cells into tissues during embryonic development by interacting with other extracellular matrix components. This Hirudo medicinalis (Medicinal leech) protein is Laminin subunit B.